The sequence spans 339 residues: Ribosomal RNA small subunit methyltransferase C (339 aa).

It belongs to the methyltransferase superfamily. RsmC family. In terms of assembly, monomer.

The protein localises to the cytoplasm. The catalysed reaction is guanosine(1207) in 16S rRNA + S-adenosyl-L-methionine = N(2)-methylguanosine(1207) in 16S rRNA + S-adenosyl-L-homocysteine + H(+). In terms of biological role, specifically methylates the guanine in position 1207 of 16S rRNA in the 30S particle. In Aliivibrio fischeri (strain MJ11) (Vibrio fischeri), this protein is Ribosomal RNA small subunit methyltransferase C.